The following is a 328-amino-acid chain: tRNA uridine(34) hydroxylase (328 aa).

Residues leucine 130 to glutamate 224 enclose the Rhodanese domain. Cysteine 184 serves as the catalytic Cysteine persulfide intermediate.

This sequence belongs to the TrhO family.

It carries out the reaction uridine(34) in tRNA + AH2 + O2 = 5-hydroxyuridine(34) in tRNA + A + H2O. Functionally, catalyzes oxygen-dependent 5-hydroxyuridine (ho5U) modification at position 34 in tRNAs. The chain is tRNA uridine(34) hydroxylase from Streptococcus sanguinis (strain SK36).